A 98-amino-acid chain; its full sequence is MGSLTKADLAENLVDSIGLSKKDAKDLVEGFFDVVRSSLIERQQVKLSGFGNFEVREKSQRPGRNPKTGEEIPITARTVVTFRPGQKLKSKVEDYMQE.

This sequence belongs to the bacterial histone-like protein family. In terms of assembly, heterodimer of an alpha and a beta chain.

Functionally, this protein is one of the two subunits of integration host factor, a specific DNA-binding protein that functions in genetic recombination as well as in transcriptional and translational control. In Marinomonas sp. (strain MWYL1), this protein is Integration host factor subunit alpha.